A 379-amino-acid polypeptide reads, in one-letter code: UDP-N-acetylglucosamine--N-acetylmuramyl-(pentapeptide) pyrophosphoryl-undecaprenol N-acetylglucosamine transferase (379 aa).

UDP-N-acetyl-alpha-D-glucosamine is bound by residues 17–19 (TGG), Asn128, Arg169, Ser197, and Gln298.

Belongs to the glycosyltransferase 28 family. MurG subfamily.

The protein resides in the cell inner membrane. It carries out the reaction di-trans,octa-cis-undecaprenyl diphospho-N-acetyl-alpha-D-muramoyl-L-alanyl-D-glutamyl-meso-2,6-diaminopimeloyl-D-alanyl-D-alanine + UDP-N-acetyl-alpha-D-glucosamine = di-trans,octa-cis-undecaprenyl diphospho-[N-acetyl-alpha-D-glucosaminyl-(1-&gt;4)]-N-acetyl-alpha-D-muramoyl-L-alanyl-D-glutamyl-meso-2,6-diaminopimeloyl-D-alanyl-D-alanine + UDP + H(+). It functions in the pathway cell wall biogenesis; peptidoglycan biosynthesis. In terms of biological role, cell wall formation. Catalyzes the transfer of a GlcNAc subunit on undecaprenyl-pyrophosphoryl-MurNAc-pentapeptide (lipid intermediate I) to form undecaprenyl-pyrophosphoryl-MurNAc-(pentapeptide)GlcNAc (lipid intermediate II). This Brucella suis (strain ATCC 23445 / NCTC 10510) protein is UDP-N-acetylglucosamine--N-acetylmuramyl-(pentapeptide) pyrophosphoryl-undecaprenol N-acetylglucosamine transferase.